A 1334-amino-acid polypeptide reads, in one-letter code: Adenylate cyclase type 9 (1334 aa).

Disordered regions lie at residues 1–28 (MASP…SNSV) and 49–71 (ISSS…GLRR). The Cytoplasmic segment spans residues 1-113 (MASPPHQQLL…CFPQTQRRFR (113 aa)). The segment covering 16–28 (EVSCDSSGDSNSV) has biased composition (polar residues). Gly residues predominate over residues 57-69 (ESGGVGRGGGGGL). The helical transmembrane segment at 114–134 (YALFYIGSACLLWGIYFGVHM) threads the bilayer. Residues 135–137 (REK) are Extracellular-facing. Residues 138–158 (QMVFMVPALCFLLVCVAFFAF) form a helical membrane-spanning segment. Topologically, residues 159–167 (TFTKAYARR) are cytoplasmic. The chain crosses the membrane as a helical span at residues 168 to 187 (YVWTSGYTLLVFALTLAPQF). Topologically, residues 188–207 (QPWTLGERQRVQPRPAAPVD) are extracellular. The helical transmembrane segment at 208–227 (TCLSQVGSFSMCVEVLLLLY) threads the bilayer. Topologically, residues 228-233 (TVMHLP) are cytoplasmic. Residues 234-250 (LYLSLFLGLSYSVLFET) traverse the membrane as a helical segment. Over 251 to 269 (SAFRDESCTLLGGGAVYWE) the chain is Extracellular. A helical membrane pass occupies residues 270-290 (LLSKAFLHVCIHAIGIHLFIM). Over 291–768 (SEVRSRSTFL…VKTFASATFS (478 aa)) the chain is Cytoplasmic. The interval 338–363 (QGDDESENSVKRHSTSSPKNRKKKPS) is disordered. Residues 348–363 (KRHSTSSPKNRKKKPS) show a composition bias toward basic residues. Positions 388, 389, and 432 each coordinate Mg(2+). Residues 388–393 (DIVGFT), 430–432 (LGD), and R476 contribute to the ATP site. The interval 635–670 (GCQDEHKNSTKAPGGHSPKTQNGLLSPPQEEKLSNS) is disordered. Residues 769–789 (SLLDVFLSTTVFLILSVTCFL) form a helical membrane-spanning segment. The Extracellular segment spans residues 790–800 (KHGMVASPPPP). Residues 801 to 821 (AAVVVFVIAILLEVLSLVISV) traverse the membrane as a helical segment. Residues 822–849 (RMVFFLEEVMACTKRLLELISGWLPRHF) are Cytoplasmic-facing. A helical transmembrane segment spans residues 850-870 (LGAILVSLPALAVFSHFTSDF). The Extracellular segment spans residues 871 to 873 (ETN). Residues 874 to 894 (IHYTMFMCCAILIAIVQYCNF) form a helical membrane-spanning segment. Topologically, residues 895–902 (CQLSSWMR) are cytoplasmic. A helical membrane pass occupies residues 903-923 (SLLATVVGAVLLILLYVSLCP). At 924–957 (DSSVETLHLDLAQNLSSRKSPCNSSMPADVKRPA) the chain is on the extracellular side. N937 and N946 each carry an N-linked (GlcNAc...) asparagine glycan. A helical transmembrane segment spans residues 958 to 978 (DLIGQEVILAVFLLLLLVWFL). At 979 to 1334 (NRSFEVSYRL…LTKLNVSKSV (356 aa)) the chain is on the cytoplasmic side. ATP is bound by residues K1090, 1167 to 1169 (DIW), 1174 to 1178 (NIASR), and K1214. The segment at 1266–1303 (SVQNSDKTAHATDNSETKDALPSSKKLQKEPTKAEERC) is disordered. 2 stretches are compositionally biased toward basic and acidic residues: residues 1272 to 1284 (KTAH…ETKD) and 1292 to 1303 (LQKEPTKAEERC).

It belongs to the adenylyl cyclase class-4/guanylyl cyclase family. The cofactor is Mg(2+). Requires Mn(2+) as cofactor. Detected in embryonic heart (at protein level).

It is found in the cell membrane. The protein localises to the membrane. The enzyme catalyses ATP = 3',5'-cyclic AMP + diphosphate. Insensitive to calcium/calmodulin, forskolin and somatostatin. Stimulated by beta-adrenergic receptor activation. Activity is down-regulated by calcium/calcineurin. Adenylyl cyclase that catalyzes the formation of the signaling molecule cAMP in response to activation of G protein-coupled receptors. In Gallus gallus (Chicken), this protein is Adenylate cyclase type 9 (ADCY9).